The primary structure comprises 235 residues: Uridylate kinase (235 aa).

9–12 (KLSG) is an ATP binding site. Gly-51 contributes to the UMP binding site. Positions 52 and 56 each coordinate ATP. UMP is bound by residues Asp-71 and 132 to 139 (TGNPYFTT). Residues Thr-159, Tyr-165, and Asp-168 each coordinate ATP.

Belongs to the UMP kinase family. Homohexamer.

The protein localises to the cytoplasm. The catalysed reaction is UMP + ATP = UDP + ADP. The protein operates within pyrimidine metabolism; CTP biosynthesis via de novo pathway; UDP from UMP (UMPK route): step 1/1. Its activity is regulated as follows. Inhibited by UTP. In terms of biological role, catalyzes the reversible phosphorylation of UMP to UDP. This is Uridylate kinase from Flavobacterium psychrophilum (strain ATCC 49511 / DSM 21280 / CIP 103535 / JIP02/86).